Reading from the N-terminus, the 79-residue chain is MSEILPYSDEKMGHYGSDGEVGQISFSCRLQDTSSFFGGNQQKRPPKLGQIGRAKRVVIEDDRIDEVLKGVSDKSPSGV.

The tract at residues 43–69 is inhibitory domain; the sequence is KRPPKLGQIGRAKRVVIEDDRIDEVLK.

It belongs to the CAMK2N family.

Its subcellular location is the nucleus. The protein resides in the cytoplasm. The protein localises to the cytosol. In terms of biological role, potent and specific cellular inhibitor of CaM-kinase II (CAMK2). Traps Ca(2+)/calmodulin on CAMK2. The sequence is that of Calcium/calmodulin-dependent protein kinase II inhibitor 2 (camk2n2) from Xenopus laevis (African clawed frog).